We begin with the raw amino-acid sequence, 968 residues long: RNA polymerase-associated protein RapA (968 aa).

Residues 164–334 (DVGRRHAPRV…FARLRLLDPN (171 aa)) enclose the Helicase ATP-binding domain. Position 177-184 (177-184 (DEVGLGKT)) interacts with ATP. A DEAH box motif is present at residues 280 to 283 (DEAH). A Helicase C-terminal domain is found at 490–662 (RVEWLMGYLT…YLASPVQTEG (173 aa)).

Belongs to the SNF2/RAD54 helicase family. RapA subfamily. As to quaternary structure, interacts with the RNAP. Has a higher affinity for the core RNAP than for the holoenzyme. Its ATPase activity is stimulated by binding to RNAP.

Functionally, transcription regulator that activates transcription by stimulating RNA polymerase (RNAP) recycling in case of stress conditions such as supercoiled DNA or high salt concentrations. Probably acts by releasing the RNAP, when it is trapped or immobilized on tightly supercoiled DNA. Does not activate transcription on linear DNA. Probably not involved in DNA repair. This Shigella sonnei (strain Ss046) protein is RNA polymerase-associated protein RapA.